The chain runs to 226 residues: Ribonuclease 3 (226 aa).

One can recognise an RNase III domain in the interval 6–128; that stretch reads FNKLQKKMGY…IIGGIFLDSN (123 aa). A Mg(2+)-binding site is contributed by glutamate 41. The active site involves aspartate 45. Mg(2+) contacts are provided by asparagine 114 and glutamate 117. Residue glutamate 117 is part of the active site. Positions 155–225 constitute a DRBM domain; the sequence is DPKTRLQEYL…AKQALLLFNI (71 aa).

Belongs to the ribonuclease III family. As to quaternary structure, homodimer. The cofactor is Mg(2+).

It is found in the cytoplasm. The catalysed reaction is Endonucleolytic cleavage to 5'-phosphomonoester.. Its function is as follows. Digests double-stranded RNA. Involved in the processing of primary rRNA transcript to yield the immediate precursors to the large and small rRNAs (23S and 16S). Processes some mRNAs, and tRNAs when they are encoded in the rRNA operon. Processes pre-crRNA and tracrRNA of type II CRISPR loci if present in the organism. This Wigglesworthia glossinidia brevipalpis protein is Ribonuclease 3.